A 257-amino-acid chain; its full sequence is GTP cyclohydrolase FolE2 (257 aa).

It belongs to the GTP cyclohydrolase IV family.

It catalyses the reaction GTP + H2O = 7,8-dihydroneopterin 3'-triphosphate + formate + H(+). Its pathway is cofactor biosynthesis; 7,8-dihydroneopterin triphosphate biosynthesis; 7,8-dihydroneopterin triphosphate from GTP: step 1/1. In terms of biological role, converts GTP to 7,8-dihydroneopterin triphosphate. The polypeptide is GTP cyclohydrolase FolE2 (Kosmotoga olearia (strain ATCC BAA-1733 / DSM 21960 / TBF 19.5.1)).